Consider the following 50-residue polypeptide: DLWQWGQMILKETGKLPFSYYTAYGCYCGWGGRGGKPKADTDRCCFVHDC.

Residues Tyr-27, Gly-29, and Gly-31 each contribute to the Ca(2+) site. Cys-28 and Cys-45 are joined by a disulfide. The active site involves His-48. Asp-49 provides a ligand contact to Ca(2+).

Belongs to the phospholipase A2 family. Group II subfamily. D49 sub-subfamily. Ca(2+) serves as cofactor. In terms of tissue distribution, expressed by the venom gland.

The protein localises to the secreted. It carries out the reaction a 1,2-diacyl-sn-glycero-3-phosphocholine + H2O = a 1-acyl-sn-glycero-3-phosphocholine + a fatty acid + H(+). Snake venom phospholipase A2 (PLA2) that causes irreversible neuromuscular blockade in chick biventer cervicis muscle preparations. The neuromuscular blockade is mediated by inhibitory action at the presynaptic motor nerve endings. PLA2 catalyzes the calcium-dependent hydrolysis of the 2-acyl groups in 3-sn-phosphoglycerides. In Bothrops marajoensis (Marajo lancehead), this protein is Basic phospholipase A2 Bmaj-9.